We begin with the raw amino-acid sequence, 142 residues long: Large-conductance mechanosensitive channel (142 aa).

3 consecutive transmembrane segments (helical) span residues 15–35 (AFVM…GAAF), 38–58 (IVTS…IGNI), and 82–102 (GMFI…FVAI).

The protein belongs to the MscL family. As to quaternary structure, homopentamer.

The protein localises to the cell inner membrane. Channel that opens in response to stretch forces in the membrane lipid bilayer. May participate in the regulation of osmotic pressure changes within the cell. This is Large-conductance mechanosensitive channel from Fusobacterium nucleatum subsp. nucleatum (strain ATCC 25586 / DSM 15643 / BCRC 10681 / CIP 101130 / JCM 8532 / KCTC 2640 / LMG 13131 / VPI 4355).